The sequence spans 195 residues: MGGKQSSASRSRAPFPGVSSDDSAVPPSSNFGHFRGGGAMGLRSRSVSSVSGLDPPAAALPFGLYRAGPDTERGGGSGSEDSRGGLYLGSRASLADTLHITPRWIGAHSGFRCPICSKSVASDEMEMHFIMCLSKPRLSYNDDVLTRDAGECVICLEELSQGDTIARLPCLCIYHKSCIDSWFEVNRCCPEHPSD.

Over residues 1–10 (MGGKQSSASR) the composition is skewed to polar residues. The tract at residues 1 to 37 (MGGKQSSASRSRAPFPGVSSDDSAVPPSSNFGHFRGG) is disordered. Residue G2 is the site of N-myristoyl glycine attachment. Positions 18–29 (VSSDDSAVPPSS) are enriched in low complexity. An RING-type; atypical zinc finger spans residues 152 to 193 (CVICLEELSQGDTIARLPCLCIYHKSCIDSWFEVNRCCPEHP).

It is found in the endosome. The protein resides in the lysosome. It localises to the membrane. It catalyses the reaction S-ubiquitinyl-[E2 ubiquitin-conjugating enzyme]-L-cysteine + [acceptor protein]-L-lysine = [E2 ubiquitin-conjugating enzyme]-L-cysteine + N(6)-ubiquitinyl-[acceptor protein]-L-lysine.. It functions in the pathway protein modification; protein ubiquitination. Its function is as follows. E3 ubiquitin-protein ligase that plays a role in neuron cells differentiation. Plays a role in the establishment and maintenance of neuronal transmission and plasticity. This chain is E3 ubiquitin-protein ligase ZNRF1 (znrf1), found in Xenopus laevis (African clawed frog).